Reading from the N-terminus, the 302-residue chain is Ribosomal RNA small subunit methyltransferase H (302 aa).

S-adenosyl-L-methionine contacts are provided by residues 36 to 38, Asp56, Phe84, Asp99, and Gln106; that span reads GGH.

This sequence belongs to the methyltransferase superfamily. RsmH family.

The protein localises to the cytoplasm. It catalyses the reaction cytidine(1402) in 16S rRNA + S-adenosyl-L-methionine = N(4)-methylcytidine(1402) in 16S rRNA + S-adenosyl-L-homocysteine + H(+). In terms of biological role, specifically methylates the N4 position of cytidine in position 1402 (C1402) of 16S rRNA. This chain is Ribosomal RNA small subunit methyltransferase H, found in Christiangramia forsetii (strain DSM 17595 / CGMCC 1.15422 / KT0803) (Gramella forsetii).